We begin with the raw amino-acid sequence, 176 residues long: Ribosome rescue factor SmrB (176 aa).

In terms of domain architecture, Smr spans 97-172 (LDMHGMTQQE…GDGALLVLLS (76 aa)).

It belongs to the SmrB family. In terms of assembly, associates with collided ribosomes, but not with correctly translating polysomes.

Acts as a ribosome collision sensor. Detects stalled/collided disomes (pairs of ribosomes where the leading ribosome is stalled and a second ribosome has collided with it) and endonucleolytically cleaves mRNA at the 5' boundary of the stalled ribosome. Stalled/collided disomes form a new interface (primarily via the 30S subunits) that binds SmrB. Cleaved mRNA becomes available for tmRNA ligation, leading to ribosomal subunit dissociation and rescue of stalled ribosomes. The sequence is that of Ribosome rescue factor SmrB from Vibrio vulnificus (strain YJ016).